The following is a 579-amino-acid chain: MEDNSCIGFEGSKRFGETSKRIIGLIDSVTESTTDSSLSSSSSGVGSSSGRSSVAERSVSSPPTKSQILGWPLGQGSWRKSSGKMKKKTPTKIDDFGFKRVGTETSEIELLKERMAKLLLGEDMSGSGEGVCPALAISNAITNLYAAILGQQWRLEPIPSEKKLMWRREIEVLLSVSDHIVELVPSFQNFPNGNKIEVMNCRPRSDLFTCLPALRKLDNMLIEILDSFGETEFWYVDQGIVAAESARSNSFREDGDKWWLPLPRVPSDGLTEQTRKKLDHTREFTNQILKACMSINSIALAEMEVPQSYLEALPKNGRSCLGDFLYRNITSDNFSADHLLESIDLSSELAVVEMANRVEASMYVWRRRAHSRHLISLYRSTSTRWGMIVKEMMMHQTDGDKREIFAERAESLLIRLKQRFPGLRQTALDTSKIQYNKDVGKSILESYSRVLESLAYSIGVRIEEVLFMDDISKDDGDGDDDSCSDKLRLLSKEAASGGSGSLREKLSAPSLFSVSFSGTSTPYRTLSFSASTPSYSPMPLISPINGGRGGERAPFLSGRNIRERCGFGPKKALANYLRG.

A compositionally biased stretch (low complexity) spans 31–61 (ESTTDSSLSSSSSGVGSSSGRSSVAERSVSS). Residues 31–89 (ESTTDSSLSSSSSGVGSSSGRSSVAERSVSSPPTKSQILGWPLGQGSWRKSSGKMKKKT) are disordered. In terms of domain architecture, PRONE spans 98–479 (FKRVGTETSE…DISKDDGDGD (382 aa)).

Its function is as follows. Guanine-nucleotide exchange factor (GEF) that acts as an activator of Rop (Rho of plants) GTPases by promoting the exchange of GDP for GTP. The protein is Rop guanine nucleotide exchange factor 6 (ROPGEF6) of Arabidopsis thaliana (Mouse-ear cress).